A 201-amino-acid chain; its full sequence is Small ribosomal subunit protein uS4 (201 aa).

The 67-residue stretch at Ser91–Val157 folds into the S4 RNA-binding domain.

It belongs to the universal ribosomal protein uS4 family. As to quaternary structure, part of the 30S ribosomal subunit. Contacts protein S5. The interaction surface between S4 and S5 is involved in control of translational fidelity.

Its function is as follows. One of the primary rRNA binding proteins, it binds directly to 16S rRNA where it nucleates assembly of the body of the 30S subunit. In terms of biological role, with S5 and S12 plays an important role in translational accuracy. This chain is Small ribosomal subunit protein uS4, found in Rhodococcus erythropolis (strain PR4 / NBRC 100887).